A 383-amino-acid chain; its full sequence is Na(+)/H(+) antiporter NhaA (383 aa).

The next 11 helical transmembrane spans lie at 14–34 (AGGI…NSPL), 47–67 (FGMS…FLLI), 87–107 (IFPA…YVAF), 117–137 (GWAI…ALLG), 146–166 (VFLL…IALF), 171–191 (LSSM…MLNA), 205–225 (AILW…GVVI), 252–272 (VAFG…LEGV), 280–300 (MLPL…IFSF), 321–341 (IFAV…ISSL), and 356–376 (LGIL…LHFS).

The protein belongs to the NhaA Na(+)/H(+) (TC 2.A.33) antiporter family.

Its subcellular location is the cell inner membrane. It carries out the reaction Na(+)(in) + 2 H(+)(out) = Na(+)(out) + 2 H(+)(in). The catalysed reaction is Li(+)(in) + 2 H(+)(out) = Li(+)(out) + 2 H(+)(in). Its activity is regulated as follows. Activity is regulated by pH. Active at alkaline pH. Amiloride strongly reduces affinity for Na(+), but does not change the Vmax. Na(+)/H(+) antiporter that extrudes sodium in exchange for external protons. Can also transport lithium and potassium. This chain is Na(+)/H(+) antiporter NhaA, found in Vibrio parahaemolyticus serotype O3:K6 (strain RIMD 2210633).